We begin with the raw amino-acid sequence, 180 residues long: Outer-membrane lipoprotein LolB (180 aa).

The N-terminal stretch at 1–16 (MIRRVLLLSLALLLAG) is a signal peptide. C17 is lipidated: N-palmitoyl cysteine. C17 carries the S-diacylglycerol cysteine lipid modification.

Belongs to the LolB family. Monomer.

The protein resides in the cell outer membrane. Plays a critical role in the incorporation of lipoproteins in the outer membrane after they are released by the LolA protein. This Chromobacterium violaceum (strain ATCC 12472 / DSM 30191 / JCM 1249 / CCUG 213 / NBRC 12614 / NCIMB 9131 / NCTC 9757 / MK) protein is Outer-membrane lipoprotein LolB.